Here is a 500-residue protein sequence, read N- to C-terminus: Bifunctional protein GlmU (500 aa).

Positions 1-242 (MPVQTAVVVL…SAKVAGANDR (242 aa)) are pyrophosphorylase. UDP-N-acetyl-alpha-D-glucosamine contacts are provided by residues 10 to 13 (LAAG), Lys-24, Gln-81, and 86 to 87 (GT). Position 112 (Asp-112) interacts with Mg(2+). UDP-N-acetyl-alpha-D-glucosamine contacts are provided by Gly-151, Glu-167, Asn-182, and Asn-240. Residue Asn-240 participates in Mg(2+) binding. The linker stretch occupies residues 243–263 (VQLSRLAAELNRRTVENWMRA). The interval 264-500 (GVTVVDPSTT…KQDLKDGIEQ (237 aa)) is N-acetyltransferase. UDP-N-acetyl-alpha-D-glucosamine-binding residues include Arg-345 and Lys-363. His-375 (proton acceptor) is an active-site residue. Residues Tyr-378 and Asn-389 each contribute to the UDP-N-acetyl-alpha-D-glucosamine site. Acetyl-CoA contacts are provided by residues Ala-392, 398-399 (NY), Ser-417, and Ala-435. A disordered region spans residues 459-500 (DGWVQRNRPGTPAAEAASAAGPHHSSDLHETEKQDLKDGIEQ). Basic and acidic residues predominate over residues 482–500 (HSSDLHETEKQDLKDGIEQ).

This sequence in the N-terminal section; belongs to the N-acetylglucosamine-1-phosphate uridyltransferase family. In the C-terminal section; belongs to the transferase hexapeptide repeat family. Homotrimer. It depends on Mg(2+) as a cofactor.

The protein resides in the cytoplasm. The enzyme catalyses alpha-D-glucosamine 1-phosphate + acetyl-CoA = N-acetyl-alpha-D-glucosamine 1-phosphate + CoA + H(+). It catalyses the reaction N-acetyl-alpha-D-glucosamine 1-phosphate + UTP + H(+) = UDP-N-acetyl-alpha-D-glucosamine + diphosphate. The protein operates within nucleotide-sugar biosynthesis; UDP-N-acetyl-alpha-D-glucosamine biosynthesis; N-acetyl-alpha-D-glucosamine 1-phosphate from alpha-D-glucosamine 6-phosphate (route II): step 2/2. It participates in nucleotide-sugar biosynthesis; UDP-N-acetyl-alpha-D-glucosamine biosynthesis; UDP-N-acetyl-alpha-D-glucosamine from N-acetyl-alpha-D-glucosamine 1-phosphate: step 1/1. Its pathway is bacterial outer membrane biogenesis; LPS lipid A biosynthesis. Catalyzes the last two sequential reactions in the de novo biosynthetic pathway for UDP-N-acetylglucosamine (UDP-GlcNAc). The C-terminal domain catalyzes the transfer of acetyl group from acetyl coenzyme A to glucosamine-1-phosphate (GlcN-1-P) to produce N-acetylglucosamine-1-phosphate (GlcNAc-1-P), which is converted into UDP-GlcNAc by the transfer of uridine 5-monophosphate (from uridine 5-triphosphate), a reaction catalyzed by the N-terminal domain. In Rhodococcus opacus (strain B4), this protein is Bifunctional protein GlmU.